Consider the following 173-residue polypeptide: ADP-ribosylation factor-like protein 11 (173 aa).

Residue glycine 2 is the site of N-myristoyl glycine attachment. Residues 17–24 (GLDCAGKT), 61–65 (DIGGQ), and 120–123 (NKQE) each bind GTP.

This sequence belongs to the small GTPase superfamily. Arf family.

Functionally, may play a role in apoptosis. May act as a tumor suppressor. This Rattus norvegicus (Rat) protein is ADP-ribosylation factor-like protein 11 (Arl11).